Here is a 315-residue protein sequence, read N- to C-terminus: Lipoyl synthase (315 aa).

Residues cysteine 62, cysteine 67, cysteine 73, cysteine 88, cysteine 92, cysteine 95, and serine 302 each coordinate [4Fe-4S] cluster. The region spanning 74–291 is the Radical SAM core domain; it reads FGKGTATFMI…ETEALAMGFK (218 aa).

The protein belongs to the radical SAM superfamily. Lipoyl synthase family. [4Fe-4S] cluster serves as cofactor.

It localises to the cytoplasm. The enzyme catalyses [[Fe-S] cluster scaffold protein carrying a second [4Fe-4S](2+) cluster] + N(6)-octanoyl-L-lysyl-[protein] + 2 oxidized [2Fe-2S]-[ferredoxin] + 2 S-adenosyl-L-methionine + 4 H(+) = [[Fe-S] cluster scaffold protein] + N(6)-[(R)-dihydrolipoyl]-L-lysyl-[protein] + 4 Fe(3+) + 2 hydrogen sulfide + 2 5'-deoxyadenosine + 2 L-methionine + 2 reduced [2Fe-2S]-[ferredoxin]. Its pathway is protein modification; protein lipoylation via endogenous pathway; protein N(6)-(lipoyl)lysine from octanoyl-[acyl-carrier-protein]: step 2/2. In terms of biological role, catalyzes the radical-mediated insertion of two sulfur atoms into the C-6 and C-8 positions of the octanoyl moiety bound to the lipoyl domains of lipoate-dependent enzymes, thereby converting the octanoylated domains into lipoylated derivatives. The protein is Lipoyl synthase of Aromatoleum aromaticum (strain DSM 19018 / LMG 30748 / EbN1) (Azoarcus sp. (strain EbN1)).